A 404-amino-acid chain; its full sequence is Glucose-1-phosphate adenylyltransferase (404 aa).

Residues Y99, G164, 179-180, and S197 each bind alpha-D-glucose 1-phosphate; that span reads EK.

Belongs to the bacterial/plant glucose-1-phosphate adenylyltransferase family. Homotetramer.

It catalyses the reaction alpha-D-glucose 1-phosphate + ATP + H(+) = ADP-alpha-D-glucose + diphosphate. Its pathway is glycan biosynthesis; glycogen biosynthesis. Its function is as follows. Involved in the biosynthesis of ADP-glucose, a building block required for the elongation reactions to produce glycogen. Catalyzes the reaction between ATP and alpha-D-glucose 1-phosphate (G1P) to produce pyrophosphate and ADP-Glc. The protein is Glucose-1-phosphate adenylyltransferase of Rhodococcus opacus (strain B4).